Reading from the N-terminus, the 160-residue chain is Probable cyclic pyranopterin monophosphate synthase (160 aa).

Over residues 1–12 (MSDDSELTHVTD) the composition is skewed to basic and acidic residues. The segment at 1-24 (MSDDSELTHVTDDGDAQMVDVGEK) is disordered. Residues 78-80 (MCH) and 114-115 (ME) contribute to the substrate site. Aspartate 129 is an active-site residue.

It belongs to the MoaC family. Homohexamer; trimer of dimers.

The enzyme catalyses (8S)-3',8-cyclo-7,8-dihydroguanosine 5'-triphosphate = cyclic pyranopterin phosphate + diphosphate. It functions in the pathway cofactor biosynthesis; molybdopterin biosynthesis. In terms of biological role, catalyzes the conversion of (8S)-3',8-cyclo-7,8-dihydroguanosine 5'-triphosphate to cyclic pyranopterin monophosphate (cPMP). This is Probable cyclic pyranopterin monophosphate synthase from Natronomonas pharaonis (strain ATCC 35678 / DSM 2160 / CIP 103997 / JCM 8858 / NBRC 14720 / NCIMB 2260 / Gabara) (Halobacterium pharaonis).